The following is a 673-amino-acid chain: UvrABC system protein C (673 aa).

The GIY-YIG domain occupies 16-95 (VEPGVYKFRD…IKEFDPRFNV (80 aa)). A UVR domain is found at 208 to 243 (DKMVRELERRMHAAAEDLDFETAARLRDDVQALRRA). The segment at 488–526 (RDEAERDELDGTAAGAPLVDDDETPTSRPGIDPTTGRPR) is disordered.

The protein belongs to the UvrC family. Interacts with UvrB in an incision complex.

The protein localises to the cytoplasm. In terms of biological role, the UvrABC repair system catalyzes the recognition and processing of DNA lesions. UvrC both incises the 5' and 3' sides of the lesion. The N-terminal half is responsible for the 3' incision and the C-terminal half is responsible for the 5' incision. This Nocardia farcinica (strain IFM 10152) protein is UvrABC system protein C.